We begin with the raw amino-acid sequence, 199 residues long: Fe/S biogenesis protein NfuA (199 aa).

2 residues coordinate [4Fe-4S] cluster: Cys-151 and Cys-154.

Belongs to the NfuA family. As to quaternary structure, homodimer. [4Fe-4S] cluster is required as a cofactor.

Functionally, involved in iron-sulfur cluster biogenesis. Binds a 4Fe-4S cluster, can transfer this cluster to apoproteins, and thereby intervenes in the maturation of Fe/S proteins. Could also act as a scaffold/chaperone for damaged Fe/S proteins. The polypeptide is Fe/S biogenesis protein NfuA (Xylella fastidiosa (strain M12)).